The primary structure comprises 303 residues: Glycine betaine/carnitine/choline-binding protein OpuCC (303 aa).

Positions 1–20 are cleaved as a signal peptide; it reads MTKIKWLGAFALVFVMLLGG. C21 carries the N-palmitoyl cysteine lipid modification. Residue C21 is the site of S-diacylglycerol cysteine attachment.

It belongs to the OsmX family. The complex is composed of two ATP-binding proteins (OpuCA), two transmembrane proteins (OpuCB and OpuCD) and a solute-binding protein (OpuCC).

The protein resides in the cell membrane. In terms of biological role, member of a high affinity multicomponent binding-protein-dependent transport system for glycine betaine, carnitine, and choline. This is Glycine betaine/carnitine/choline-binding protein OpuCC (opuCC) from Bacillus subtilis (strain 168).